The primary structure comprises 134 residues: Cytochrome b (134 aa).

The next 3 membrane-spanning stretches (helical) occupy residues 33–53 (FGSL…FLAM), 77–98 (WLIR…FLHV), and 113–133 (WNMG…GYVL). The heme b site is built by His83 and His97.

The protein belongs to the cytochrome b family. In terms of assembly, the cytochrome bc1 complex contains 11 subunits: 3 respiratory subunits (MT-CYB, CYC1 and UQCRFS1), 2 core proteins (UQCRC1 and UQCRC2) and 6 low-molecular weight proteins (UQCRH/QCR6, UQCRB/QCR7, UQCRQ/QCR8, UQCR10/QCR9, UQCR11/QCR10 and a cleavage product of UQCRFS1). This cytochrome bc1 complex then forms a dimer. Requires heme b as cofactor.

Its subcellular location is the mitochondrion inner membrane. Its function is as follows. Component of the ubiquinol-cytochrome c reductase complex (complex III or cytochrome b-c1 complex) that is part of the mitochondrial respiratory chain. The b-c1 complex mediates electron transfer from ubiquinol to cytochrome c. Contributes to the generation of a proton gradient across the mitochondrial membrane that is then used for ATP synthesis. In Microtus subterraneus (European pine vole), this protein is Cytochrome b (MT-CYB).